Consider the following 182-residue polypeptide: MNVIGVVGLPASGKGEFSKIAEGLGIPVVVMGDVIRNAVKKAGLPPTDENLGAMANRLRAERGMDAIAILCVDAVKEQKARLVLIDGIRGDAEVRVFREHFPGFRLIAIETSFEKRLSRLCERKRSDDVGSAEGLLTRDKRELGWGLGNALQLADIRLNNDGSLEEFTARVTDLIHSMEREP.

8-15 is an ATP binding site; that stretch reads GLPASGKG.

It belongs to the UPF0200 family.

This chain is UPF0200 protein Mboo_1593, found in Methanoregula boonei (strain DSM 21154 / JCM 14090 / 6A8).